A 483-amino-acid chain; its full sequence is Probable zinc metalloprotease PTRG_04977 (483 aa).

A signal peptide spans 1–18 (MLFRSALLSNVLLLPACA). Asparagine 96 and asparagine 121 each carry an N-linked (GlcNAc...) asparagine glycan. Zn(2+) is bound by residues histidine 167, aspartate 187, and glutamate 220. N-linked (GlcNAc...) asparagine glycosylation occurs at asparagine 235. Aspartate 247 serves as a coordination point for Zn(2+). Asparagine 310, asparagine 362, asparagine 401, asparagine 411, and asparagine 421 each carry an N-linked (GlcNAc...) asparagine glycan. The 88-residue stretch at 396-483 (PAMPRNVTID…KSPAVYPFPG (88 aa)) folds into the Fibronectin type-III domain.

It belongs to the peptidase M28 family. M28B subfamily. The cofactor is Zn(2+).

It is found in the secreted. The sequence is that of Probable zinc metalloprotease PTRG_04977 from Pyrenophora tritici-repentis (strain Pt-1C-BFP) (Wheat tan spot fungus).